The following is a 150-amino-acid chain: MKCPFCAHPDSKVVDSRPDKGGAAIRRRRECESCAKRFTTHERIEETLPLVLKKDGRREPFDRMKIVGGILKACEKRQVSRETVDRLVDRLEGRLQEWSEKEVPSTTIGEWVMTELHDIDEVAYVRFASVYRSFKDVNEFMAELQDLLKK.

Residues 3–34 fold into a zinc finger; sequence CPFCAHPDSKVVDSRPDKGGAAIRRRRECESC. The ATP-cone domain occupies 49–139; that stretch reads PLVLKKDGRR…VYRSFKDVNE (91 aa).

This sequence belongs to the NrdR family. It depends on Zn(2+) as a cofactor.

In terms of biological role, negatively regulates transcription of bacterial ribonucleotide reductase nrd genes and operons by binding to NrdR-boxes. The polypeptide is Transcriptional repressor NrdR (Geobacter metallireducens (strain ATCC 53774 / DSM 7210 / GS-15)).